A 541-amino-acid polypeptide reads, in one-letter code: Membrane protein insertase YidC (541 aa).

The helical transmembrane segment at Ile-7–Thr-27 threads the bilayer. The span at Thr-34–Ser-55 shows a compositional bias: polar residues. The segment at Thr-34–Val-59 is disordered. 4 consecutive transmembrane segments (helical) span residues Ser-343–Val-363, Leu-418–Leu-438, Leu-456–Ile-476, and Phe-495–Trp-515.

Belongs to the OXA1/ALB3/YidC family. Type 1 subfamily. In terms of assembly, interacts with the Sec translocase complex via SecD. Specifically interacts with transmembrane segments of nascent integral membrane proteins during membrane integration.

It localises to the cell inner membrane. Functionally, required for the insertion and/or proper folding and/or complex formation of integral membrane proteins into the membrane. Involved in integration of membrane proteins that insert both dependently and independently of the Sec translocase complex, as well as at least some lipoproteins. Aids folding of multispanning membrane proteins. The chain is Membrane protein insertase YidC from Aliivibrio salmonicida (strain LFI1238) (Vibrio salmonicida (strain LFI1238)).